A 521-amino-acid chain; its full sequence is Bacillolysin (521 aa).

An N-terminal signal peptide occupies residues 1–27 (MGLGKKLSVAVAASFMSLTISLPGVQA). The propeptide at 28–221 (AENPQLKENL…ILKKQNKVEH (194 aa)) is activation peptide. Residues Gln283 and Asp360 each contribute to the Ca(2+) site. Residue His364 coordinates Zn(2+). Glu365 is an active-site residue. Residues His368 and Glu388 each contribute to the Zn(2+) site. Ca(2+) contacts are provided by Asp399, Asp402, Asp404, Glu407, and Val411. His449 acts as the Proton donor in catalysis.

Belongs to the peptidase M4 family. Requires Ca(2+) as cofactor. The cofactor is Zn(2+).

The protein resides in the secreted. The catalysed reaction is Similar, but not identical, to that of thermolysin.. Functionally, extracellular zinc metalloprotease. The polypeptide is Bacillolysin (npr) (Bacillus amyloliquefaciens (Bacillus velezensis)).